The chain runs to 251 residues: Large ribosomal subunit protein uL3 (251 aa).

An N5-methylglutamine modification is found at glutamine 151. Residues 221–251 (GLKQAANSNDSAAADTPAEVAAVEATEGQEG) form a disordered region. The segment covering 225 to 251 (AANSNDSAAADTPAEVAAVEATEGQEG) has biased composition (low complexity).

It belongs to the universal ribosomal protein uL3 family. As to quaternary structure, part of the 50S ribosomal subunit. Forms a cluster with proteins L14 and L19. Methylated by PrmB.

Its function is as follows. One of the primary rRNA binding proteins, it binds directly near the 3'-end of the 23S rRNA, where it nucleates assembly of the 50S subunit. This is Large ribosomal subunit protein uL3 from Novosphingobium aromaticivorans (strain ATCC 700278 / DSM 12444 / CCUG 56034 / CIP 105152 / NBRC 16084 / F199).